A 95-amino-acid chain; its full sequence is Putative septation protein SpoVG (95 aa).

The protein belongs to the SpoVG family.

In terms of biological role, could be involved in septation. The polypeptide is Putative septation protein SpoVG (Clostridium botulinum (strain ATCC 19397 / Type A)).